Consider the following 235-residue polypeptide: Peroxynitrite isomerase 2 (235 aa).

The GXWXGXG signature appears at 82-88; the sequence is GVWRGEG. Heme b is bound by residues Lys-198 and His-225.

It belongs to the nitrobindin family. Homodimer. Heme b is required as a cofactor.

The enzyme catalyses peroxynitrite = nitrate. The protein operates within nitrogen metabolism. Heme-binding protein able to scavenge peroxynitrite and to protect free L-tyrosine against peroxynitrite-mediated nitration, by acting as a peroxynitrite isomerase that converts peroxynitrite to nitrate. Therefore, this protein likely plays a role in peroxynitrite sensing and in the detoxification of reactive nitrogen and oxygen species (RNS and ROS, respectively). Is able to bind nitric oxide (NO) in vitro, but may act as a sensor of peroxynitrite levels in vivo. This is Peroxynitrite isomerase 2 from Mycolicibacterium paratuberculosis (strain ATCC BAA-968 / K-10) (Mycobacterium paratuberculosis).